The chain runs to 112 residues: uncharacterized protein (112 aa).

Transmembrane regions (helical) follow at residues 33–53 (PSPLLLSLLLHYTVLFSPFGA), 58–78 (LYIYIYIYIYIYIYMCINVCT), and 91–111 (CVYVCTHFNIYIHTYIYLLFV).

The protein resides in the membrane. This is an uncharacterized protein from Saccharomyces cerevisiae (strain ATCC 204508 / S288c) (Baker's yeast).